The sequence spans 837 residues: SLIT and NTRK-like protein 4 (837 aa).

A signal peptide spans 1–18; sequence MFLWLFLIVSALISSTNA. The Extracellular segment spans residues 19-618; sequence DSDISVEICN…SPPGGPVPLS (600 aa). LRR repeat units follow at residues 60 to 81, 84 to 105, 108 to 129, 132 to 153, 156 to 177, and 179 to 200; these read NFYHLNFQNNFLNILYPNTFVN, HAVSLHLGNNKLQNIEGGAFLG, ALKQLHLNNNELKILRADTFLG, NLEYLQADYNLIKYIERGAFNK, KLKVLILNDNLISFLPDNIFRF, and SLTHLDIRGNRIQKLPYIGVLE. A glycan (N-linked (GlcNAc...) asparagine) is linked at asparagine 81. The LRRCT 1 domain occupies 213 to 264; it reads NPWNCSCDLLPLKAWLENMPYNIYIGEAICETPSDLYGRLLKETNKQELCPM. N-linked (GlcNAc...) asparagine glycosylation occurs at asparagine 325. In terms of domain architecture, LRRNT spans 333 to 375; it reads QTRVPPLTPCPVPCFCKTHPSDLGLSVNCQEKNIQSMSELTPK. LRR repeat units follow at residues 378-399, 402-423, 426-447, 450-471, 474-495, and 497-518; these read NAKKLHVNGNNIKDVDISDFTE, GLDLLHLGSNQITLIKGEVFHN, NLRRLYLNGNQIERLYPEIFSG, NLQYLYLEYNLIKEILAGTFDS, NLQLLYLNNNLLKSLPVYIFSG, and PLARLNLRNNKFMYLPVSGVLD. An N-linked (GlcNAc...) asparagine glycan is attached at asparagine 423. Residues 531 to 582 form the LRRCT 2 domain; the sequence is NPWDCTCDLVALKLWLEKLNDGIVVKELKCETPVQFANIELKSLKNEILCPK. The helical transmembrane segment at 619–639 threads the bilayer; it reads ILILSILVVLILTVFVAFCLL. Over 640-837 the chain is Cytoplasmic; sequence VFVLRRNKKP…LEEQTALNKI (198 aa).

It belongs to the SLITRK family. Interacts (via LRR 1 and 2 repeats) with PTPRD (via extracellular domain). As to expression, in the adult, significant expression is detected only in the brain. Broadly expressed in embryonic brain with highest expression in subventricular zone, subplate, cortical plate, pyramidal cell layer of hippocampus, thalamus and hypothalamus.

It localises to the membrane. The protein resides in the cell membrane. It is involved in synaptogenesis and promotes synapse differentiation. Suppresses neurite outgrowth. The sequence is that of SLIT and NTRK-like protein 4 (Slitrk4) from Mus musculus (Mouse).